A 1631-amino-acid polypeptide reads, in one-letter code: ALK tyrosine kinase receptor (1631 aa).

A signal peptide spans 1 to 18 (MGSVGLLGLLLLRLSVTA). Over 19-1053 (SGSGAGTGSG…PHLPLSLVLS (1035 aa)) the chain is Extracellular. The interval 20–53 (GSGAGTGSGTGSGTGTGTGQLVGSPATGPALQPR) is disordered. The span at 21-39 (SGAGTGSGTGSGTGTGTGQ) shows a compositional bias: gly residues. The interval 60–82 (RLQRKSLAVDFVVPSLFRVYARD) is heparin-binding region. N-linked (GlcNAc...) asparagine glycans are attached at residues N185, N260, N301, N340, N427, N440, N461, N579, N587, and N643. Residues 280–443 (LECSFDFPCE…DFFALKNCSE (164 aa)) form the MAM 1 domain. In terms of domain architecture, MAM 2 spans 494–652 (FYCNFENGFC…NISISLDCYL (159 aa)). C703 and C716 form a disulfide bridge. N-linked (GlcNAc...) asparagine glycosylation is present at N724. Cysteines 798 and 809 form a disulfide. Residues N823, N878, N879, and N901 are each glycosylated (N-linked (GlcNAc...) asparagine). C921 and C943 are oxidised to a cystine. A glycan (N-linked (GlcNAc...) asparagine) is linked at N1001. Intrachain disulfides connect C1002/C1010, C1005/C1021, and C1023/C1036. The segment at 1002–1040 (CSHCEGDECHMDPESHKVICFCDHGTVLAEDGVSCIVSP) is EGF-like. The helical transmembrane segment at 1054–1074 (VVTSALVAALVLAFSGIMIVY) threads the bilayer. Over 1075 to 1631 (RRKHQELQAM…DALLKTPPGP (557 aa)) the chain is Cytoplasmic. Positions 1131-1407 (ITLIRGLGHG…IEYCTQDPDV (277 aa)) constitute a Protein kinase domain. ATP-binding positions include 1137 to 1145 (LGHGAFGEV) and K1165. D1264 serves as the catalytic Proton acceptor. Disordered regions lie at residues 1423–1493 (EEKV…GHVN), 1526–1554 (WFTE…REGS), and 1609–1631 (FEGT…PPGP).

As to quaternary structure, homodimer; homodimerizes following heparin- and ligand-binding. Interacts with CBL, IRS1, PIK3R1 and PLCG1. Interacts with FRS2 and SHC1. Interacts with PTN and MDK. In terms of processing, phosphorylated at tyrosine residues by autocatalysis, which activates kinase activity. In cells not stimulated by a ligand, receptor protein tyrosine phosphatase beta and zeta complex (PTPRB/PTPRZ1) dephosphorylates ALK at the sites in ALK that are undergoing autophosphorylation through autoactivation.

The protein resides in the cell membrane. It catalyses the reaction L-tyrosyl-[protein] + ATP = O-phospho-L-tyrosyl-[protein] + ADP + H(+). Activated upon ALKAL2 ligand-binding. ALKAL2-driven activation is coupled with heparin-binding. Following ligand-binding, homodimerizes and autophosphorylates, activating its kinase activity. Inactivated through dephosphorylation by receptor protein tyrosine phosphatase beta and zeta complex (PTPRB/PTPRZ1) when there is no stimulation by a ligand. Its function is as follows. Neuronal receptor tyrosine kinase that is essentially and transiently expressed in specific regions of the central and peripheral nervous systems and plays an important role in the genesis and differentiation of the nervous system. Also acts as a key thinness protein involved in the resistance to weight gain: in hypothalamic neurons, controls energy expenditure acting as a negative regulator of white adipose tissue lipolysis and sympathetic tone to fine-tune energy homeostasis. Following activation by ALKAL2 ligand at the cell surface, transduces an extracellular signal into an intracellular response. In contrast, ALKAL1 is not a potent physiological ligand for ALK. Ligand-binding to the extracellular domain induces tyrosine kinase activation, leading to activation of the mitogen-activated protein kinase (MAPK) pathway. Phosphorylates almost exclusively at the first tyrosine of the Y-x-x-x-Y-Y motif. Induces tyrosine phosphorylation of CBL, FRS2, IRS1 and SHC1, as well as of the MAP kinases MAPK1/ERK2 and MAPK3/ERK1. ALK activation may also be regulated by pleiotrophin (PTN) and midkine (MDK). PTN-binding induces MAPK pathway activation, which is important for the anti-apoptotic signaling of PTN and regulation of cell proliferation. MDK-binding induces phosphorylation of the ALK target insulin receptor substrate (IRS1), activates mitogen-activated protein kinases (MAPKs) and PI3-kinase, resulting also in cell proliferation induction. Drives NF-kappa-B activation, probably through IRS1 and the activation of the AKT serine/threonine kinase. Recruitment of IRS1 to activated ALK and the activation of NF-kappa-B are essential for the autocrine growth and survival signaling of MDK. The protein is ALK tyrosine kinase receptor of Canis lupus familiaris (Dog).